We begin with the raw amino-acid sequence, 123 residues long: UPF0738 protein BCG9842_B4089 (123 aa).

Belongs to the UPF0738 family.

In Bacillus cereus (strain G9842), this protein is UPF0738 protein BCG9842_B4089.